The primary structure comprises 473 residues: MAKSARTKTARPATRTETDSFGPIEVPSDRYWGAQTERSRQNFRIGTDRMPISLVHALGIVKLAAAQSNRELGLLDQRRASAIIRAAREVIDGSLDDHFPLVVWQTGSGTQTNMNLNEVIANRANELLGGELGAKKPVHPNDHVNMSQSSNDSFPTAMHIAAASRITADLVPALGELLRALRKKEKEFAKIVKIGRTHTQDATPLTLGQEFSGYAAQVESGIARLKVAVKELYPLAQGGTAVGTGLNAKPRFARLFAKHVAGITKLPFTSAANKFEALASNDAYVLAHGAISSVATGLFKIANDIRLLGSGPRSGLGELILPENEPGSSIMPGKVNPTQCEAMTMVCCQVFGNHTAITVAGSQGHFELNVYKPVLAYNMLHSIRLMADAARSFTEHCVSGIRADEKRISELMQRSLMLVTALAPKIGYDNAAKVAKTAHANGTTLKEEALRLGFVTADEFDRLVQPEKMTKPG.

The tract at residues 1–28 (MAKSARTKTARPATRTETDSFGPIEVPS) is disordered. Substrate contacts are provided by residues 108 to 110 (SGT), 139 to 142 (HPND), 149 to 151 (SSN), and threonine 197. The Proton donor/acceptor role is filled by histidine 198. Serine 328 is an active-site residue. Substrate contacts are provided by residues serine 329 and 334–336 (KVN).

This sequence belongs to the class-II fumarase/aspartase family. Fumarase subfamily. In terms of assembly, homotetramer.

It localises to the cytoplasm. The enzyme catalyses (S)-malate = fumarate + H2O. It participates in carbohydrate metabolism; tricarboxylic acid cycle; (S)-malate from fumarate: step 1/1. Involved in the TCA cycle. Catalyzes the stereospecific interconversion of fumarate to L-malate. The sequence is that of Fumarate hydratase class II 2 from Bradyrhizobium diazoefficiens (strain JCM 10833 / BCRC 13528 / IAM 13628 / NBRC 14792 / USDA 110).